The following is a 157-amino-acid chain: Phosphopantetheine adenylyltransferase (157 aa).

Belongs to the eukaryotic CoaD family. Monomer.

It localises to the cytoplasm. The catalysed reaction is (R)-4'-phosphopantetheine + ATP + H(+) = 3'-dephospho-CoA + diphosphate. It participates in cofactor biosynthesis; coenzyme A biosynthesis. Functionally, reversibly transfers an adenylyl group from ATP to 4'-phosphopantetheine, yielding dephospho-CoA (dPCoA) and pyrophosphate. The sequence is that of Phosphopantetheine adenylyltransferase from Pyrococcus abyssi (strain GE5 / Orsay).